We begin with the raw amino-acid sequence, 206 residues long: Urease accessory protein UreG (206 aa).

Residue 15 to 22 participates in GTP binding; that stretch reads GPVGSGKT.

This sequence belongs to the SIMIBI class G3E GTPase family. UreG subfamily. Homodimer. UreD, UreF and UreG form a complex that acts as a GTP-hydrolysis-dependent molecular chaperone, activating the urease apoprotein by helping to assemble the nickel containing metallocenter of UreC. The UreE protein probably delivers the nickel.

It localises to the cytoplasm. Functionally, facilitates the functional incorporation of the urease nickel metallocenter. This process requires GTP hydrolysis, probably effectuated by UreG. This is Urease accessory protein UreG from Ralstonia pickettii (strain 12J).